The chain runs to 272 residues: Shikimate dehydrogenase (NADP(+)) (272 aa).

Shikimate is bound by residues serine 14–serine 16 and threonine 61. Lysine 65 (proton acceptor) is an active-site residue. NADP(+) is bound at residue glutamate 77. The shikimate site is built by asparagine 86 and aspartate 102. Residues glycine 126–alanine 130, asparagine 149–arginine 154, and methionine 213 each bind NADP(+). A shikimate-binding site is contributed by tyrosine 215. Glycine 237 contacts NADP(+).

The protein belongs to the shikimate dehydrogenase family. Homodimer.

It carries out the reaction shikimate + NADP(+) = 3-dehydroshikimate + NADPH + H(+). The protein operates within metabolic intermediate biosynthesis; chorismate biosynthesis; chorismate from D-erythrose 4-phosphate and phosphoenolpyruvate: step 4/7. Its function is as follows. Involved in the biosynthesis of the chorismate, which leads to the biosynthesis of aromatic amino acids. Catalyzes the reversible NADPH linked reduction of 3-dehydroshikimate (DHSA) to yield shikimate (SA). The sequence is that of Shikimate dehydrogenase (NADP(+)) from Salmonella typhimurium (strain LT2 / SGSC1412 / ATCC 700720).